The chain runs to 408 residues: Peptidase T (408 aa).

Residue His78 participates in Zn(2+) binding. Asp80 is a catalytic residue. A Zn(2+)-binding site is contributed by Asp140. The Proton acceptor role is filled by Glu173. Zn(2+)-binding residues include Glu174, Asp196, and His379.

This sequence belongs to the peptidase M20B family. Zn(2+) is required as a cofactor.

The protein resides in the cytoplasm. It carries out the reaction Release of the N-terminal residue from a tripeptide.. Functionally, cleaves the N-terminal amino acid of tripeptides. The polypeptide is Peptidase T (Escherichia coli (strain UTI89 / UPEC)).